A 294-amino-acid chain; its full sequence is Lipoyl synthase (294 aa).

7 residues coordinate [4Fe-4S] cluster: cysteine 38, cysteine 43, cysteine 49, cysteine 64, cysteine 68, cysteine 71, and serine 277. A Radical SAM core domain is found at 50–266 (WSRGTATFLL…RSFAEGAGFR (217 aa)).

Belongs to the radical SAM superfamily. Lipoyl synthase family. Requires [4Fe-4S] cluster as cofactor.

It localises to the cytoplasm. The enzyme catalyses [[Fe-S] cluster scaffold protein carrying a second [4Fe-4S](2+) cluster] + N(6)-octanoyl-L-lysyl-[protein] + 2 oxidized [2Fe-2S]-[ferredoxin] + 2 S-adenosyl-L-methionine + 4 H(+) = [[Fe-S] cluster scaffold protein] + N(6)-[(R)-dihydrolipoyl]-L-lysyl-[protein] + 4 Fe(3+) + 2 hydrogen sulfide + 2 5'-deoxyadenosine + 2 L-methionine + 2 reduced [2Fe-2S]-[ferredoxin]. It functions in the pathway protein modification; protein lipoylation via endogenous pathway; protein N(6)-(lipoyl)lysine from octanoyl-[acyl-carrier-protein]: step 2/2. Functionally, catalyzes the radical-mediated insertion of two sulfur atoms into the C-6 and C-8 positions of the octanoyl moiety bound to the lipoyl domains of lipoate-dependent enzymes, thereby converting the octanoylated domains into lipoylated derivatives. The protein is Lipoyl synthase of Pelodictyon phaeoclathratiforme (strain DSM 5477 / BU-1).